A 501-amino-acid polypeptide reads, in one-letter code: ATP synthase subunit alpha, chloroplastic (501 aa).

170–177 contacts ATP; it reads GDRQTGKT.

Belongs to the ATPase alpha/beta chains family. As to quaternary structure, F-type ATPases have 2 components, CF(1) - the catalytic core - and CF(0) - the membrane proton channel. CF(1) has five subunits: alpha(3), beta(3), gamma(1), delta(1), epsilon(1). CF(0) has four main subunits: a, b, b' and c.

Its subcellular location is the plastid. The protein localises to the chloroplast thylakoid membrane. The enzyme catalyses ATP + H2O + 4 H(+)(in) = ADP + phosphate + 5 H(+)(out). In terms of biological role, produces ATP from ADP in the presence of a proton gradient across the membrane. The alpha chain is a regulatory subunit. This chain is ATP synthase subunit alpha, chloroplastic, found in Pisum sativum (Garden pea).